Consider the following 503-residue polypeptide: Probable cytosol aminopeptidase (503 aa).

Mn(2+)-binding residues include K270 and D275. Residue K282 is part of the active site. Mn(2+) contacts are provided by D293, D352, and E354. The active site involves R356.

The protein belongs to the peptidase M17 family. Mn(2+) serves as cofactor.

It localises to the cytoplasm. It catalyses the reaction Release of an N-terminal amino acid, Xaa-|-Yaa-, in which Xaa is preferably Leu, but may be other amino acids including Pro although not Arg or Lys, and Yaa may be Pro. Amino acid amides and methyl esters are also readily hydrolyzed, but rates on arylamides are exceedingly low.. The catalysed reaction is Release of an N-terminal amino acid, preferentially leucine, but not glutamic or aspartic acids.. In terms of biological role, presumably involved in the processing and regular turnover of intracellular proteins. Catalyzes the removal of unsubstituted N-terminal amino acids from various peptides. The protein is Probable cytosol aminopeptidase of Escherichia coli O139:H28 (strain E24377A / ETEC).